Consider the following 477-residue polypeptide: MSPQTETKASVGFKAGVKEYKLTYYTPEYQTKDTDILAAFRVTPQPGVPPEEAGAAVAAESSTGTWTTVWTDGLTSLDRYKGRCYRIERVVGEKDQYIAYVAYPLDLFEEGSVTNMLTSIVGNVFGFKALRALRLEDLRIPVAYVKTFQGPPHGIQVERDKLNKYGRPLLGCTIKPKLGLSAKNYGRAVYECLRGGLDFTKDDENVNSQPFMRWRDRFLFCAEALFKAQAETGEIKGHYLNATAGTCEEMMKRAVFARELGTPIVMHDYLTGGFTANTTLAHYCRDNGLLLHIHRAMHAVIDRQKNHGMHFRVLAKALRMSGGDHIHSGTVVGKLEGERDITLGFVDLLRDDFIEQDRSRGIYFTQDWVSLPGVLPVASGGIHVWHMPALTEIFGDDSVLQFGGGTLGHPWGNAPGAVANRVALEACVKARNEGRDLAREGNEIIREAAKWSPELAAACEVWKEIVFNFAAMDVLDK.

The propeptide occupies 1–2; sequence MS. Position 3 is an N-acetylproline (P3). K14 is modified (N6,N6,N6-trimethyllysine). The substrate site is built by N123 and T173. The active-site Proton acceptor is the K175. K177 contributes to the substrate binding site. Mg(2+)-binding residues include K201, D203, and E204. Position 201 is an N6-carboxylysine (K201). H294 serves as the catalytic Proton acceptor. Substrate contacts are provided by R295, H327, and S379.

The protein belongs to the RuBisCO large chain family. Type I subfamily. As to quaternary structure, heterohexadecamer of 8 large chains and 8 small chains; disulfide-linked. The disulfide link is formed within the large subunit homodimers. The cofactor is Mg(2+). In terms of processing, the disulfide bond which can form in the large chain dimeric partners within the hexadecamer appears to be associated with oxidative stress and protein turnover.

Its subcellular location is the plastid. It is found in the chloroplast. The enzyme catalyses 2 (2R)-3-phosphoglycerate + 2 H(+) = D-ribulose 1,5-bisphosphate + CO2 + H2O. It carries out the reaction D-ribulose 1,5-bisphosphate + O2 = 2-phosphoglycolate + (2R)-3-phosphoglycerate + 2 H(+). In terms of biological role, ruBisCO catalyzes two reactions: the carboxylation of D-ribulose 1,5-bisphosphate, the primary event in carbon dioxide fixation, as well as the oxidative fragmentation of the pentose substrate in the photorespiration process. Both reactions occur simultaneously and in competition at the same active site. The polypeptide is Ribulose bisphosphate carboxylase large chain (rbcL) (Solanum tuberosum (Potato)).